The sequence spans 296 residues: Large ribosomal subunit protein uL15m (296 aa).

Residues 1-21 (MAGPLQGGGARALDLLRGLPR) constitute a mitochondrion transit peptide. The interval 22-66 (VSLANLKPNPGSKKPERRPRGRRRGRKCGRGHKGERQRGTRPRLG) is disordered. Residues 36–52 (PERRPRGRRRGRKCGRG) show a composition bias toward basic residues.

It belongs to the universal ribosomal protein uL15 family. As to quaternary structure, component of the mitochondrial large ribosomal subunit (mt-LSU). Mature mammalian 55S mitochondrial ribosomes consist of a small (28S) and a large (39S) subunit. The 28S small subunit contains a 12S ribosomal RNA (12S mt-rRNA) and 30 different proteins. The 39S large subunit contains a 16S rRNA (16S mt-rRNA), a copy of mitochondrial valine transfer RNA (mt-tRNA(Val)), which plays an integral structural role, and 52 different proteins.

Its subcellular location is the mitochondrion. This Homo sapiens (Human) protein is Large ribosomal subunit protein uL15m (MRPL15).